A 273-amino-acid chain; its full sequence is Shikimate kinase (273 aa).

85-95 serves as a coordination point for ATP; that stretch reads PVGKGLKSSSA.

The protein belongs to the GHMP kinase family. Archaeal shikimate kinase subfamily.

The protein resides in the cytoplasm. The catalysed reaction is shikimate + ATP = 3-phosphoshikimate + ADP + H(+). It functions in the pathway metabolic intermediate biosynthesis; chorismate biosynthesis; chorismate from D-erythrose 4-phosphate and phosphoenolpyruvate: step 5/7. This is Shikimate kinase from Pyrococcus furiosus (strain ATCC 43587 / DSM 3638 / JCM 8422 / Vc1).